We begin with the raw amino-acid sequence, 437 residues long: Elongation factor 1-gamma (437 aa).

Alanine 2 is subject to N-acetylalanine. The 86-residue stretch at 2–87 (AAGTLYTYPE…YVSNEELRGS (86 aa)) folds into the GST N-terminal domain. The GST C-terminal domain maps to 88-216 (TPEAAAQVVQ…VKLCEKMAQF (129 aa)). N6-acetyllysine occurs at positions 147 and 212. The segment covering 221-254 (FAESQPKKDTPRKEKGSREEKQKPQTERKEEKKA) has biased composition (basic and acidic residues). Residues 221–268 (FAESQPKKDTPRKEKGSREEKQKPQTERKEEKKAAAPAPEEEMDECEQ) form a disordered region. Lysine 253 is covalently cross-linked (Glycyl lysine isopeptide (Lys-Gly) (interchain with G-Cter in SUMO1)). The EF-1-gamma C-terminal domain occupies 276-437 (AKDPFAHLPK…KAVNQGKIFK (162 aa)). Lysine 285 participates in a covalent cross-link: Glycyl lysine isopeptide (Lys-Gly) (interchain with G-Cter in SUMO2). N6-acetyllysine is present on lysine 401. An N6-acetyllysine; alternate modification is found at lysine 434. Residue lysine 434 is modified to N6-malonyllysine; alternate.

EF-1 is composed of four subunits: alpha, beta, delta, and gamma.

Probably plays a role in anchoring the complex to other cellular components. The sequence is that of Elongation factor 1-gamma (Eef1g) from Rattus norvegicus (Rat).